Reading from the N-terminus, the 208-residue chain is V-type ATP synthase subunit D (208 aa).

This sequence belongs to the V-ATPase D subunit family.

Produces ATP from ADP in the presence of a proton gradient across the membrane. The sequence is that of V-type ATP synthase subunit D from Streptococcus pyogenes serotype M6 (strain ATCC BAA-946 / MGAS10394).